Here is a 441-residue protein sequence, read N- to C-terminus: Ribulose bisphosphate carboxylase large chain (441 aa).

K4 carries the post-translational modification N6,N6,N6-trimethyllysine. Residues N113 and T163 each contribute to the substrate site. The active-site Proton acceptor is K165. K167 contributes to the substrate binding site. Mg(2+)-binding residues include K191, D193, and E194. Residue K191 is modified to N6-carboxylysine. Residue H284 is the Proton acceptor of the active site. The substrate site is built by R285, H317, and S369.

It belongs to the RuBisCO large chain family. Type I subfamily. Heterohexadecamer of 8 large chains and 8 small chains; disulfide-linked. The disulfide link is formed within the large subunit homodimers. The cofactor is Mg(2+). The disulfide bond which can form in the large chain dimeric partners within the hexadecamer appears to be associated with oxidative stress and protein turnover.

The protein resides in the plastid. Its subcellular location is the chloroplast. The catalysed reaction is 2 (2R)-3-phosphoglycerate + 2 H(+) = D-ribulose 1,5-bisphosphate + CO2 + H2O. It catalyses the reaction D-ribulose 1,5-bisphosphate + O2 = 2-phosphoglycolate + (2R)-3-phosphoglycerate + 2 H(+). RuBisCO catalyzes two reactions: the carboxylation of D-ribulose 1,5-bisphosphate, the primary event in carbon dioxide fixation, as well as the oxidative fragmentation of the pentose substrate in the photorespiration process. Both reactions occur simultaneously and in competition at the same active site. The protein is Ribulose bisphosphate carboxylase large chain of Darlingtonia californica (California pitcher plant).